The chain runs to 105 residues: Small ribosomal subunit protein uS10 (105 aa).

The protein belongs to the universal ribosomal protein uS10 family. Part of the 30S ribosomal subunit.

Involved in the binding of tRNA to the ribosomes. The protein is Small ribosomal subunit protein uS10 of Chlamydia pneumoniae (Chlamydophila pneumoniae).